The sequence spans 93 residues: Large ribosomal subunit protein eL37A (93 aa).

Zn(2+)-binding residues include cysteine 19, cysteine 22, cysteine 34, and cysteine 37. The C4-type zinc finger occupies 19–37 (CRRCGRSSYHIQKSTCAQC).

This sequence belongs to the eukaryotic ribosomal protein eL37 family. It depends on Zn(2+) as a cofactor.

Its function is as follows. Binds to the 23S rRNA. The chain is Large ribosomal subunit protein eL37A from Drosophila melanogaster (Fruit fly).